We begin with the raw amino-acid sequence, 396 residues long: L-lactate dehydrogenase (396 aa).

The 380-residue stretch at 1-380 (MIISAASDYR…TQDSLVQGLG (380 aa)) folds into the FMN hydroxy acid dehydrogenase domain. Tyr24 is a binding site for substrate. Residues Ser106 and Gln127 each coordinate FMN. Tyr129 lines the substrate pocket. Thr155 provides a ligand contact to FMN. Arg164 is a binding site for substrate. Position 251 (Lys251) interacts with FMN. The Proton acceptor role is filled by His275. Arg278 contributes to the substrate binding site. FMN is bound at residue 306-330 (DSGIRNGLDVVRMIALGADTVLLGR).

This sequence belongs to the FMN-dependent alpha-hydroxy acid dehydrogenase family. Requires FMN as cofactor.

The protein localises to the cell inner membrane. It catalyses the reaction (S)-lactate + A = pyruvate + AH2. Its function is as follows. Catalyzes the conversion of L-lactate to pyruvate. Is coupled to the respiratory chain. The polypeptide is L-lactate dehydrogenase (Shigella flexneri serotype 5b (strain 8401)).